The sequence spans 216 residues: Cytochrome c oxidase subunit 2 (216 aa).

Residues 1 to 8 (LGLQNATS) are Mitochondrial intermembrane-facing. The chain crosses the membrane as a helical span at residues 9 to 39 (PIMEELIAFHDHALMIIFLISSLVLYIISLM). At 40–53 (LTTKLTHTSTMNAQ) the chain is on the mitochondrial matrix side. The helical transmembrane segment at 54 to 81 (EIEMIWTILPAVILIMIALPSLRILYMT) threads the bilayer. Residues 82 to 216 (DEFNKPYLTL…FIYFQDFEVW (135 aa)) lie on the Mitochondrial intermembrane side of the membrane. Positions 155, 190, 192, 194, 198, and 201 each coordinate Cu cation. Glutamate 192 lines the Mg(2+) pocket.

This sequence belongs to the cytochrome c oxidase subunit 2 family. As to quaternary structure, component of the cytochrome c oxidase (complex IV, CIV), a multisubunit enzyme composed of 14 subunits. The complex is composed of a catalytic core of 3 subunits MT-CO1, MT-CO2 and MT-CO3, encoded in the mitochondrial DNA, and 11 supernumerary subunits COX4I, COX5A, COX5B, COX6A, COX6B, COX6C, COX7A, COX7B, COX7C, COX8 and NDUFA4, which are encoded in the nuclear genome. The complex exists as a monomer or a dimer and forms supercomplexes (SCs) in the inner mitochondrial membrane with NADH-ubiquinone oxidoreductase (complex I, CI) and ubiquinol-cytochrome c oxidoreductase (cytochrome b-c1 complex, complex III, CIII), resulting in different assemblies (supercomplex SCI(1)III(2)IV(1) and megacomplex MCI(2)III(2)IV(2)). Found in a complex with TMEM177, COA6, COX18, COX20, SCO1 and SCO2. Interacts with TMEM177 in a COX20-dependent manner. Interacts with COX20. Interacts with COX16. Requires Cu cation as cofactor.

It is found in the mitochondrion inner membrane. It catalyses the reaction 4 Fe(II)-[cytochrome c] + O2 + 8 H(+)(in) = 4 Fe(III)-[cytochrome c] + 2 H2O + 4 H(+)(out). Functionally, component of the cytochrome c oxidase, the last enzyme in the mitochondrial electron transport chain which drives oxidative phosphorylation. The respiratory chain contains 3 multisubunit complexes succinate dehydrogenase (complex II, CII), ubiquinol-cytochrome c oxidoreductase (cytochrome b-c1 complex, complex III, CIII) and cytochrome c oxidase (complex IV, CIV), that cooperate to transfer electrons derived from NADH and succinate to molecular oxygen, creating an electrochemical gradient over the inner membrane that drives transmembrane transport and the ATP synthase. Cytochrome c oxidase is the component of the respiratory chain that catalyzes the reduction of oxygen to water. Electrons originating from reduced cytochrome c in the intermembrane space (IMS) are transferred via the dinuclear copper A center (CU(A)) of subunit 2 and heme A of subunit 1 to the active site in subunit 1, a binuclear center (BNC) formed by heme A3 and copper B (CU(B)). The BNC reduces molecular oxygen to 2 water molecules using 4 electrons from cytochrome c in the IMS and 4 protons from the mitochondrial matrix. This Callimico goeldii (Goeldi's marmoset) protein is Cytochrome c oxidase subunit 2 (MT-CO2).